The chain runs to 495 residues: MRILQVSAELFPLLKTGGLADVAGALPLALMAAGQDARVLLPGFPAILAGVRELAPVAEFTAPWGPERFGLRAGRIAIDGAAAPITAYVIDAPVLYDRPGNPYEDATRQPYGDNHRRFALLGWAAAQLAQGLDPAWQPEVVHAHDWHAGLAPAYLHFAREAGLTRTGSVFTVHNLAYQGISAPWNFADLGLPAPAFHMNGLEYHGQVSFMKGGLYFADRLTTVSPTYAREIQTPEQGFGLDGLLRLRGGVLTGILNAVDDEVWNPATDSALVQGYHTPDGRHMAGKARCKAVLQHQLGLAERPDAPLFILVSRLTEQKGLHLVLGGLDTLLAEGGQLALLGSGEAGLEQAFRERAAAAPRAVSVTIGYNETLAHQLFGGGDVTLVPSLFEPCGLTQMYGLKYGSLPLVRRVGGLADTVVDCTLEDMASGHATGFVFDRFDAADYDRALRRAFALYQRAPDWRRVRGNAMRRPADWASAAGQYIEVYRQALESAGT.

K15 is an ADP-alpha-D-glucose binding site.

Belongs to the glycosyltransferase 1 family. Bacterial/plant glycogen synthase subfamily.

It catalyses the reaction [(1-&gt;4)-alpha-D-glucosyl](n) + ADP-alpha-D-glucose = [(1-&gt;4)-alpha-D-glucosyl](n+1) + ADP + H(+). The protein operates within glycan biosynthesis; glycogen biosynthesis. In terms of biological role, synthesizes alpha-1,4-glucan chains using ADP-glucose. The sequence is that of Glycogen synthase from Variovorax paradoxus (strain S110).